The primary structure comprises 436 residues: Probable G-protein coupled receptor C06G4.5 (436 aa).

The Extracellular segment spans residues 1–53; sequence MSTNLVDYVDDSYLNQSMNSENGLDSVTQIMYDMKKYNIVNDVLPPPNHEDLH. Asn15 carries an N-linked (GlcNAc...) asparagine glycan. The chain crosses the membrane as a helical span at residues 54–74; sequence VVIMAVSYLLLFLLGTCGNVA. Over 75–94 the chain is Cytoplasmic; the sequence is VLTTIYHVIRSSRATLDNTL. The chain crosses the membrane as a helical span at residues 95-115; the sequence is IYVIVLSCVDFGVCLSLPITV. At 116-132 the chain is on the extracellular side; that stretch reads IDQILGFWMFGKIPCKL. A helical transmembrane segment spans residues 133–153; sequence HAVFENFGKILSALILTAMSF. Topologically, residues 154–171 are cytoplasmic; sequence DRYAGVCHPQRKRLRSRN. Residues 172–192 form a helical membrane-spanning segment; it reads FAITILLVLAVYAFITLCPLL. Topologically, residues 193 to 230 are extracellular; it reads WSFTAREIILYAKETAPGMLTRMKIEKCTVDIDSQMFT. The chain crosses the membrane as a helical span at residues 231 to 251; sequence AFTIYQFILCYCTPLVLIAFF. Residues 252-281 lie on the Cytoplasmic side of the membrane; sequence YTKLLSKLREHTRTFKSSQIPFLHISLYTL. A helical membrane pass occupies residues 282 to 302; that stretch reads AVACFYFLCWTPFWMATLFAV. The Extracellular segment spans residues 303-316; that stretch reads YLENSANSSSVPPV. An N-linked (GlcNAc...) asparagine glycan is attached at Asn309. The helical transmembrane segment at 317–337 threads the bilayer; it reads FVYIMYFIHALPFTNSAINWI. Topologically, residues 338-436 are cytoplasmic; sequence LYGALNGQLQ…LLSNHNPTFL (99 aa).

Belongs to the G-protein coupled receptor 1 family.

It localises to the cell membrane. In terms of biological role, putative receptor. In Caenorhabditis elegans, this protein is Probable G-protein coupled receptor C06G4.5.